A 323-amino-acid chain; its full sequence is MDLSPYIKISERDNFTIYSYPKKYLELFLDELFYQKSIEINDDHTFKMSKNGYIIDNFNKESSVDFEYLRQSQIAVYWIHEWYDYLIKNSDNKNITFKTKLIELSNEDIESLFNFKTYGIIPESLLKIIDDSITEINNLCFVRTDAYSPKDLVFENKIDNLKVSDALTAIKLITDSERCCQKLFSNDQIISKYLAIREYVNLDTNYEFRCFIYNWNLRAICQSGFEYNSELHAKKKIIRDSILKFWNKFESICPYSECTMDIIYDNNFKNTLNDSCIMVIEFNSFGPHMNADSGLYDWDRDYILLTKSNQPHFLLAEKPLNTI.

Belongs to the CDC123 family.

This Acanthamoeba polyphaga mimivirus (APMV) protein is Putative CDC123-like protein L884.